The sequence spans 569 residues: Cytosolic purine 5'-nucleotidase (569 aa).

Catalysis depends on Asp-52, which acts as the Nucleophile. Residues Asp-52 and Asp-54 each contribute to the IMP site. 2 residues coordinate Mg(2+): Asp-52 and Asp-54. Catalysis depends on Asp-54, which acts as the Proton donor. ATP contacts are provided by Arg-144 and Asn-154. 7 residues coordinate IMP: Arg-202, Asp-206, Lys-215, Thr-249, Asn-250, Ser-251, and Lys-292. Mg(2+) is bound at residue Asp-351. 2 residues coordinate ATP: Gln-453 and Arg-456. A disordered region spans residues 527–569 (SISEIKPPNLFPQAPQEITHCHDEDDDEEEEEEEVEEEEEEEE). Residues 548 to 569 (HDEDDDEEEEEEEVEEEEEEEE) are required for tetramer assembly. Residues 550-569 (EDDDEEEEEEEVEEEEEEEE) are compositionally biased toward acidic residues.

The protein belongs to the 5'(3')-deoxyribonucleotidase family. In terms of assembly, homotetramer. Requires Mg(2+) as cofactor.

Its subcellular location is the cytoplasm. The protein resides in the cytosol. It catalyses the reaction a ribonucleoside 5'-phosphate + H2O = a ribonucleoside + phosphate. The catalysed reaction is a 2'-deoxyribonucleoside + a ribonucleoside 5'-phosphate = a ribonucleoside + a 2'-deoxyribonucleoside 5'-phosphate. It carries out the reaction IMP + H2O = inosine + phosphate. The enzyme catalyses GMP + H2O = guanosine + phosphate. It catalyses the reaction dGMP + H2O = 2'-deoxyguanosine + phosphate. The catalysed reaction is dIMP + H2O = 2'-deoxyinosine + phosphate. It carries out the reaction XMP + H2O = xanthosine + phosphate. The enzyme catalyses inosine + GMP = guanosine + IMP. It catalyses the reaction dGMP + inosine = 2'-deoxyguanosine + IMP. The catalysed reaction is dIMP + inosine = 2'-deoxyinosine + IMP. It carries out the reaction inosine + UMP = uridine + IMP. The enzyme catalyses inosine + CMP = cytidine + IMP. It catalyses the reaction inosine + AMP = IMP + adenosine. Allosterically activated by various compounds including ATP, 2,3-BPG/2,3-Bisphosphoglyceric acid and Ap4A/P1,P4-bis(5'-adenosyl) tetraphosphate. Binding of an allosteric activator is a prerequisiste to magnesium and substrate binding. Inhibited by inorganic phosphate. Inhibited by inosine, guanosine, p-chloromercuribenzoate and NaF. Broad specificity cytosolic 5'-nucleotidase that catalyzes the dephosphorylation of 6-hydroxypurine nucleoside 5'-monophosphates. In addition, possesses a phosphotransferase activity by which it can transfer a phosphate from a donor nucleoside monophosphate to an acceptor nucleoside, preferably inosine, deoxyinosine and guanosine. Has the highest activities for IMP and GMP followed by dIMP, dGMP and XMP. Could also catalyze the transfer of phosphates from pyrimidine monophosphates but with lower efficiency. Through these activities regulates the purine nucleoside/nucleotide pools within the cell. This Gallus gallus (Chicken) protein is Cytosolic purine 5'-nucleotidase (NT5C2).